The primary structure comprises 112 residues: Macrodomain Ori protein (112 aa).

Positions Phe91–Asp112 are disordered. The span at Gly103 to Asp112 shows a compositional bias: acidic residues.

The protein belongs to the MaoP family.

Its function is as follows. Involved in the organization of the Ori region of the chromosome into a macrodomain (MD). It constrains DNA mobility in the Ori macrodomain and limits long-distance DNA interactions with other chromosomal regions. This chain is Macrodomain Ori protein, found in Salmonella choleraesuis (strain SC-B67).